The following is a 307-amino-acid chain: Recombination-associated protein RdgC (307 aa).

Belongs to the RdgC family.

The protein localises to the cytoplasm. Its subcellular location is the nucleoid. May be involved in recombination. The polypeptide is Recombination-associated protein RdgC (Burkholderia orbicola (strain MC0-3)).